A 206-amino-acid polypeptide reads, in one-letter code: Sec-independent protein translocase protein TatB (206 aa).

The chain crosses the membrane as a helical span at residues 1–21; it reads MFDIGWTELLVIAVVLIVVVG. Residues 104-206 are disordered; sequence ENKTEVPSAA…VQTKKKKDEA (103 aa). Residues 110 to 124 show a composition bias toward low complexity; that stretch reads PSAAMSAPTPSMSLP. The span at 125 to 138 shows a compositional bias: pro residues; that stretch reads ETPPVVPTPAPAPE. 2 stretches are compositionally biased toward low complexity: residues 139–151 and 187–196; these read PAAV…AAKP and ARKPAAPKTP.

Belongs to the TatB family. As to quaternary structure, the Tat system comprises two distinct complexes: a TatABC complex, containing multiple copies of TatA, TatB and TatC subunits, and a separate TatA complex, containing only TatA subunits. Substrates initially bind to the TatABC complex, which probably triggers association of the separate TatA complex to form the active translocon.

The protein resides in the cell inner membrane. Its function is as follows. Part of the twin-arginine translocation (Tat) system that transports large folded proteins containing a characteristic twin-arginine motif in their signal peptide across membranes. Together with TatC, TatB is part of a receptor directly interacting with Tat signal peptides. TatB may form an oligomeric binding site that transiently accommodates folded Tat precursor proteins before their translocation. The polypeptide is Sec-independent protein translocase protein TatB (Rhizobium etli (strain ATCC 51251 / DSM 11541 / JCM 21823 / NBRC 15573 / CFN 42)).